The chain runs to 431 residues: Chaperone SurA (431 aa).

The first 20 residues, 1–20 (MKNWRTLILGLALSASTAFA), serve as a signal peptide directing secretion. PpiC domains are found at residues 171–272 (NDEL…KVND) and 282–382 (VTET…QLLD).

Its subcellular location is the periplasm. The enzyme catalyses [protein]-peptidylproline (omega=180) = [protein]-peptidylproline (omega=0). In terms of biological role, chaperone involved in the correct folding and assembly of outer membrane proteins. Recognizes specific patterns of aromatic residues and the orientation of their side chains, which are found more frequently in integral outer membrane proteins. May act in both early periplasmic and late outer membrane-associated steps of protein maturation. The sequence is that of Chaperone SurA from Pectobacterium atrosepticum (strain SCRI 1043 / ATCC BAA-672) (Erwinia carotovora subsp. atroseptica).